Reading from the N-terminus, the 147-residue chain is Arginine repressor (147 aa).

The protein belongs to the ArgR family.

Its subcellular location is the cytoplasm. The protein operates within amino-acid biosynthesis; L-arginine biosynthesis [regulation]. Regulates arginine biosynthesis genes. This chain is Arginine repressor, found in Chlamydia caviae (strain ATCC VR-813 / DSM 19441 / 03DC25 / GPIC) (Chlamydophila caviae).